Here is a 355-residue protein sequence, read N- to C-terminus: Uroporphyrinogen decarboxylase (355 aa).

Residues 27 to 31 (RQAGR), Phe46, Asp77, Tyr154, Thr209, and His328 contribute to the substrate site.

Belongs to the uroporphyrinogen decarboxylase family. Homodimer.

The protein localises to the cytoplasm. The enzyme catalyses uroporphyrinogen III + 4 H(+) = coproporphyrinogen III + 4 CO2. The protein operates within porphyrin-containing compound metabolism; protoporphyrin-IX biosynthesis; coproporphyrinogen-III from 5-aminolevulinate: step 4/4. Catalyzes the decarboxylation of four acetate groups of uroporphyrinogen-III to yield coproporphyrinogen-III. In Vibrio vulnificus (strain CMCP6), this protein is Uroporphyrinogen decarboxylase.